Consider the following 309-residue polypeptide: Taste receptor type 2 member 114 (309 aa).

Over 1–7 (MLGAMEG) the chain is Extracellular. The chain crosses the membrane as a helical span at residues 8–28 (VLLSVATSEALLGIVGNTFIA). Over 29 to 43 (LVNCMDCTRNKNLYN) the chain is Cytoplasmic. A helical transmembrane segment spans residues 44–64 (IGFILTGLAISRICLVWILIT). Residues 65–87 (EAYIKIFSPQLLSPINIIELISY) are Extracellular-facing. A helical membrane pass occupies residues 88-108 (LWIITSQLNVWFATSLSIFYF). Over 109–127 (LKIANFSHHIFLWLKRRIN) the chain is Cytoplasmic. A helical membrane pass occupies residues 128–148 (IVFAFLIGCLLMSWLFSFPVV). Over 149–182 (VKMVKDKKMLYINSSWQIHMKKSELIINYVFTNG) the chain is Extracellular. An N-linked (GlcNAc...) asparagine glycan is attached at Asn-161. A helical transmembrane segment spans residues 183–203 (GVFLLFIIMLIVCFLLIISLW). Over 204–233 (RHSKWMQSNESGFRDLNTEVHVKTIKVLLS) the chain is Cytoplasmic. The helical transmembrane segment at 234-254 (FIILFILHLIGITINVICLLV) threads the bilayer. Residues 255 to 259 (PENNL) are Extracellular-facing. The chain crosses the membrane as a helical span at residues 260-280 (LFVFGLTIAFLYPCCHSLILI). Topologically, residues 281-309 (LANSRLKRCFVRILQQLMCSEEGKEFRNT) are cytoplasmic.

It belongs to the G-protein coupled receptor T2R family.

It is found in the membrane. In terms of biological role, putative taste receptor which may play a role in the perception of bitterness. This is Taste receptor type 2 member 114 from Rattus norvegicus (Rat).